A 792-amino-acid chain; its full sequence is Endonuclease MutS2 (792 aa).

Gly334–Thr341 serves as a coordination point for ATP. The 76-residue stretch at Ile717 to Lys792 folds into the Smr domain.

The protein belongs to the DNA mismatch repair MutS family. MutS2 subfamily. Homodimer. Binds to stalled ribosomes, contacting rRNA.

Functionally, endonuclease that is involved in the suppression of homologous recombination and thus may have a key role in the control of bacterial genetic diversity. Its function is as follows. Acts as a ribosome collision sensor, splitting the ribosome into its 2 subunits. Detects stalled/collided 70S ribosomes which it binds and splits by an ATP-hydrolysis driven conformational change. Acts upstream of the ribosome quality control system (RQC), a ribosome-associated complex that mediates the extraction of incompletely synthesized nascent chains from stalled ribosomes and their subsequent degradation. Probably generates substrates for RQC. The polypeptide is Endonuclease MutS2 (Agathobacter rectalis (strain ATCC 33656 / DSM 3377 / JCM 17463 / KCTC 5835 / VPI 0990) (Eubacterium rectale)).